Reading from the N-terminus, the 362-residue chain is Porin Omp2b (362 aa).

Positions 1–22 are cleaved as a signal peptide; that stretch reads MNIKSLLLGSAAALVAASGAQA.

This sequence belongs to the alphaproteobacteria porin family. In terms of assembly, homotrimer.

It is found in the cell outer membrane. Forms passive diffusion pores that allow small molecular weight hydrophilic materials across the outer membrane. This Brucella melitensis biotype 1 (strain ATCC 23456 / CCUG 17765 / NCTC 10094 / 16M) protein is Porin Omp2b (omp2b).